A 311-amino-acid chain; its full sequence is Cytochrome f (311 aa).

The N-terminal stretch at 1–27 (MRRHLSLLIGSLVLGLSLLIAPAASWA) is a signal peptide. Heme contacts are provided by Y28, C48, C51, and H52. The chain crosses the membrane as a helical span at residues 277 to 297 (IYGLLAFFAAVALAQIMLVLK).

It belongs to the cytochrome f family. In terms of assembly, the 4 large subunits of the cytochrome b6-f complex are cytochrome b6, subunit IV (17 kDa polypeptide, PetD), cytochrome f and the Rieske protein, while the 4 small subunits are PetG, PetL, PetM and PetN. The complex functions as a dimer. It depends on heme as a cofactor.

The protein resides in the cellular thylakoid membrane. Its function is as follows. Component of the cytochrome b6-f complex, which mediates electron transfer between photosystem II (PSII) and photosystem I (PSI), cyclic electron flow around PSI, and state transitions. This is Cytochrome f from Parasynechococcus marenigrum (strain WH8102).